The following is a 367-amino-acid chain: MASPCLVAVLVFLCAIVSCYSDNPIDSCWRGDSNWDQNRMKLADCVVGFGSSTMGGKGGEIYTVTSSEDNPVNPTPGTLRYGATREKALWIIFSQNMNIKLQMPLYVAGYKTIDGRGADVHLGNGGPCLFMRKASHVILHGLHIHGCNTSVLGDVLVSESIGVEPVHAQDGDAITMRNVTNAWIDHNSLSDCSDGLIDVTLGSTGITISNNHFFNHHKVMLLGHDDTYDDDKSMKVTVAFNQFGPNAGQRMPRARYGLVHVANNNYDQWNIYAIGGSSNPTILSEGNSFTAPNESYKKEVTKRIGCETTSACANWVWRSTRDAFTNGAYFVSSGKAEDTNIYNSNEAFKVENGNAAPQLTQNAGVVA.

Residues 1-21 form the signal peptide; it reads MASPCLVAVLVFLCAIVSCYS. 2 disulfides stabilise this stretch: Cys28–Cys45 and Cys128–Cys147. The N-linked (GlcNAc...) asparagine glycan is linked to Asn148. Asp170 lines the Ca(2+) pocket. Asn178 is a glycosylation site (N-linked (GlcNAc...) asparagine). Asp194 and Asp198 together coordinate Ca(2+). Arg250 is a catalytic residue. N-linked (GlcNAc...) asparagine glycosylation is present at Asn293. The cysteines at positions 306 and 312 are disulfide-linked.

Belongs to the polysaccharide lyase 1 family. Amb a subfamily. It depends on Ca(2+) as a cofactor.

It carries out the reaction Eliminative cleavage of (1-&gt;4)-alpha-D-galacturonan to give oligosaccharides with 4-deoxy-alpha-D-galact-4-enuronosyl groups at their non-reducing ends.. Its pathway is glycan metabolism; pectin degradation; 2-dehydro-3-deoxy-D-gluconate from pectin: step 2/5. Has pectate lyase activity. In Hesperocyparis arizonica (Arizona cypress), this protein is Pectate lyase 1.